We begin with the raw amino-acid sequence, 419 residues long: Bilin biosynthesis protein CpeY (419 aa).

Functionally, involved in the biosynthesis of bilin. This Synechococcus sp. (strain WH8020) protein is Bilin biosynthesis protein CpeY (cpeY).